The chain runs to 322 residues: Trans-acting factor B (322 aa).

The disordered stretch occupies residues 35 to 188 (DDAEAVFPTS…ASTQEAETAE (154 aa)). Polar residues-rich tracts occupy residues 72–97 (QEST…SIGR) and 110–166 (QESP…TSRA). Positions 167–178 (AETRERSPEHTE) are enriched in basic and acidic residues.

In terms of biological role, plasmid partition require REP1, REP2, and a cis-acting DNA sequence (known as STB). REP1 may act by intercalating in the yeast nuclear matrix and binding STB either directly or via REP2. The chain is Trans-acting factor B (B) from Zygosaccharomyces bisporus.